Consider the following 762-residue polypeptide: Polyribonucleotide nucleotidyltransferase (762 aa).

2 residues coordinate Mg(2+): D531 and D537. One can recognise a KH domain in the interval P597 to I656. An S1 motif domain is found at G668–V737.

This sequence belongs to the polyribonucleotide nucleotidyltransferase family. Mg(2+) is required as a cofactor.

The protein localises to the cytoplasm. It carries out the reaction RNA(n+1) + phosphate = RNA(n) + a ribonucleoside 5'-diphosphate. In terms of biological role, involved in mRNA degradation. Catalyzes the phosphorolysis of single-stranded polyribonucleotides processively in the 3'- to 5'-direction. The polypeptide is Polyribonucleotide nucleotidyltransferase (Mycobacterium marinum (strain ATCC BAA-535 / M)).